The following is a 188-amino-acid chain: UPF0397 protein LCK_00164 (188 aa).

Transmembrane regions (helical) follow at residues 15-35 (VVAT…IAIP), 48-68 (GWLA…VGLI), 79-99 (GAPW…LGFG), 121-141 (WQAV…DIII), and 154-174 (AVTT…LLVA).

Belongs to the UPF0397 family.

Its subcellular location is the cell membrane. The chain is UPF0397 protein LCK_00164 from Leuconostoc citreum (strain KM20).